We begin with the raw amino-acid sequence, 124 residues long: uncharacterized protein (124 aa).

The first 22 residues, M1 to T22, serve as a signal peptide directing secretion.

This is an uncharacterized protein from Caenorhabditis elegans.